A 228-amino-acid polypeptide reads, in one-letter code: Phosphatidate cytidylyltransferase (228 aa).

6 consecutive transmembrane segments (helical) span residues 31–51 (FVVAILWFKTLFYILMILVGL), 65–85 (IHYLLIGFIIIPIPISLLIFL), 93–113 (LVIMLYFCIIWSVDTFAMIGG), 131–151 (WTGLIIGTISAGLIAVLVSLI), 165–185 (IYLFIISCILALIAQSSDLFI), and 206–226 (GVLDRFDSIILTAPVFFGINI).

This sequence belongs to the CDS family.

It localises to the cell membrane. It carries out the reaction a 1,2-diacyl-sn-glycero-3-phosphate + CTP + H(+) = a CDP-1,2-diacyl-sn-glycerol + diphosphate. Its pathway is phospholipid metabolism; CDP-diacylglycerol biosynthesis; CDP-diacylglycerol from sn-glycerol 3-phosphate: step 3/3. This is Phosphatidate cytidylyltransferase (cdsA) from Rickettsia typhi (strain ATCC VR-144 / Wilmington).